A 485-amino-acid polypeptide reads, in one-letter code: UDP-N-acetylmuramate--L-alanine ligase (485 aa).

Residue 120 to 126 coordinates ATP; sequence GSHGKTT.

The protein belongs to the MurCDEF family.

It localises to the cytoplasm. The catalysed reaction is UDP-N-acetyl-alpha-D-muramate + L-alanine + ATP = UDP-N-acetyl-alpha-D-muramoyl-L-alanine + ADP + phosphate + H(+). It participates in cell wall biogenesis; peptidoglycan biosynthesis. Cell wall formation. The chain is UDP-N-acetylmuramate--L-alanine ligase from Rickettsia massiliae (strain Mtu5).